A 38-amino-acid chain; its full sequence is Large ribosomal subunit protein bL36 (38 aa).

The protein belongs to the bacterial ribosomal protein bL36 family.

This chain is Large ribosomal subunit protein bL36, found in Buchnera aphidicola subsp. Baizongia pistaciae (strain Bp).